The sequence spans 353 residues: Biotin synthase (353 aa).

The Radical SAM core domain occupies 51–270 (NEVQCNQLLN…IALARIMMPK (220 aa)). [4Fe-4S] cluster is bound by residues C66, C70, and C73. [2Fe-2S] cluster-binding residues include C110, C141, C201, and R274. Positions 330–353 (APVEAHSHDHDHDHHDHHHGHSHS) are disordered. The span at 334-343 (AHSHDHDHDH) shows a compositional bias: basic and acidic residues. The span at 344–353 (HDHHHGHSHS) shows a compositional bias: basic residues.

The protein belongs to the radical SAM superfamily. Biotin synthase family. In terms of assembly, homodimer. The cofactor is [4Fe-4S] cluster. Requires [2Fe-2S] cluster as cofactor.

The catalysed reaction is (4R,5S)-dethiobiotin + (sulfur carrier)-SH + 2 reduced [2Fe-2S]-[ferredoxin] + 2 S-adenosyl-L-methionine = (sulfur carrier)-H + biotin + 2 5'-deoxyadenosine + 2 L-methionine + 2 oxidized [2Fe-2S]-[ferredoxin]. Its pathway is cofactor biosynthesis; biotin biosynthesis; biotin from 7,8-diaminononanoate: step 2/2. Functionally, catalyzes the conversion of dethiobiotin (DTB) to biotin by the insertion of a sulfur atom into dethiobiotin via a radical-based mechanism. This chain is Biotin synthase, found in Rhodopseudomonas palustris (strain HaA2).